The chain runs to 319 residues: MVLSSDLLRDDKQLDLFFASLDVKKRYLLALSGGSDSLFLFYLLKERGVSFTAVHIDHGWRSTSAQEAKELEELCAREGVPFVLYTLTAEEQGDKDLENQARKKRYAFLYESYRQLDAGGIFLAHHANDQAETVLKRLLESAHLTNLKAMAERSYVEDVLLLRPLLHIPKSSLKEALDARGISYLQDPSNEDERYLRARMRKKLFPWLEEVFGKNITFPLLTLGEESAELSEYLEKQAQPFFSAATHQDSQGELPCPDCLIQQAFLCKWVMKKFFNNAGIAVSRHFLQMVYDHLSRSSCATLRMRNKIVIIKPGVVVID.

32 to 37 (SGGSDS) contributes to the ATP binding site.

It belongs to the tRNA(Ile)-lysidine synthase family.

It is found in the cytoplasm. The enzyme catalyses cytidine(34) in tRNA(Ile2) + L-lysine + ATP = lysidine(34) in tRNA(Ile2) + AMP + diphosphate + H(+). Functionally, ligates lysine onto the cytidine present at position 34 of the AUA codon-specific tRNA(Ile) that contains the anticodon CAU, in an ATP-dependent manner. Cytidine is converted to lysidine, thus changing the amino acid specificity of the tRNA from methionine to isoleucine. This chain is tRNA(Ile)-lysidine synthase, found in Chlamydia pneumoniae (Chlamydophila pneumoniae).